A 985-amino-acid polypeptide reads, in one-letter code: SWI/SNF complex subunit SWI3D (985 aa).

A disordered region spans residues 1-55; it reads MEEKRRDSAGTLAFAGSSGDSPASEPMPAPRRRGGGLKRKANALGGSNFFSSAPS. Basic residues predominate over residues 30-41; sequence PRRRGGGLKRKA. Positions 108-133 form a coiled coil; that stretch reads EKPKEEEERNKAIREWEALEAKIEAD. In terms of domain architecture, SWIRM spans 145 to 242; the sequence is HVVPNHCGWF…FHPFPPTDTG (98 aa). The ZZ-type; degenerate zinc finger occupies 305 to 359; the sequence is AVEYHCNSCSADCSRKRYHCPKQADFDLCTECFNSGKFSSDMSSSDFILMEPAEA. Cys-310, Cys-313, Cys-333, and Cys-336 together coordinate Zn(2+). Residues 362 to 413 enclose the SANT domain; it reads VGSGKWTDQETLLLLEALEIFKENWNEIAEHVATKTKAQCMLHFLQMPIEDA. Composition is skewed to basic and acidic residues over residues 428–464, 493–502, and 615–661; these read TTDL…KEVP, AEQKTPKLET, and DNSH…EKQP. 2 disordered regions span residues 428–502 and 591–814; these read TTDL…KLET and EDPP…EGKK. Over residues 662-671 the composition is skewed to polar residues; it reads GSRTENSTTK. Over residues 703–724 the composition is skewed to basic and acidic residues; the sequence is CSGKELQEPLKDGNKLSSENKD. The span at 725-736 shows a compositional bias: polar residues; the sequence is ASQSTVSQSAAD. The segment covering 742-776 has biased composition (basic and acidic residues); it reads ASRDVEMKDTLQSEKDPEDVVKTVGEKVQLAKEEG. The span at 780-800 shows a compositional bias: polar residues; sequence VLSTPDKSVSQQPIGSASAPE. A coiled-coil region spans residues 839–900; the sequence is ISAAAVKAKN…EQLERSRQRL (62 aa). Positions 944–985 are disordered; that stretch reads MAFPRPPMPRPPGFPVPGSFVAATTMTGSSDPSPGSDNVSSV. A compositionally biased stretch (pro residues) spans 947–958; sequence PRPPMPRPPGFP. Positions 965–985 are enriched in polar residues; it reads AATTMTGSSDPSPGSDNVSSV.

In terms of assembly, interacts with SWI3B, but not with BSH. Component of a RNA-directed DNA methylation (RdDM) complex that contains at least MORC6, MORC1/CRT1, MORC2, SWI3D and SUVH9. Interacts with MORC6 and SUVH9. In terms of tissue distribution, ubiquitously expressed.

It is found in the nucleus. Its function is as follows. Component of a multiprotein complex equivalent of the SWI/SNF complex, an ATP-dependent chromatin-remodeling complex, which is required for the positive and negative regulation of gene expression of a large number of genes. It changes chromatin structure by altering DNA-histone contacts within a nucleosome, leading eventually to a change in nucleosome position, thus facilitating or repressing binding of gene-specific transcription factors. The protein is SWI/SNF complex subunit SWI3D (SWI3D) of Arabidopsis thaliana (Mouse-ear cress).